The primary structure comprises 764 residues: Zinc finger CCCH domain-containing protein 24 (764 aa).

ANK repeat units follow at residues 108–138 and 143–175; these read EHRT…DVNR and DGTT…DADA. A C3H1-type zinc finger spans residues 321–348; it reads HYSCVPCPDFRKGVCRRGDMCEYAHGVF. Disordered stretches follow at residues 616–665 and 698–732; these read QREK…DWGV and KESP…EGPS. Residues 640–659 are compositionally biased toward low complexity; that stretch reads SGVVGSPLSSSWSKWGSPSG. Residues 705-716 are compositionally biased toward polar residues; that stretch reads QVTTAESINSVG.

The protein is Zinc finger CCCH domain-containing protein 24 of Oryza sativa subsp. japonica (Rice).